A 223-amino-acid chain; its full sequence is uncharacterized protein (223 aa).

The HTH tetR-type domain maps to 11 to 71 (EATFESFIDA…YLLEKRQMKK (61 aa)). The segment at residues 34-53 (SVEDISRAAGYSKGAFYVHF) is a DNA-binding region (H-T-H motif).

This is an uncharacterized protein from Bacillus subtilis (strain 168).